Reading from the N-terminus, the 229-residue chain is Probable transmembrane reductase CYB561D1 (229 aa).

The Cytoplasmic segment spans residues 1-24 (MHSMEVGLVPAPAREPRLTRWLRR). Positions 22–224 (LRRGSGILAH…HQISSSYLPR (203 aa)) constitute a Cytochrome b561 domain. The chain crosses the membrane as a helical span at residues 25–45 (GSGILAHLIALGFTIFLTVLS). The Lumenal portion of the chain corresponds to 46-53 (RPGTSLFS). The chain crosses the membrane as a helical span at residues 54-74 (WHPVFMALAFCLCMAEAILLF). His-55 is a heme b binding site. At 75-91 (SPEHSLFFFCSRKTRIR) the chain is on the cytoplasmic side. The helical transmembrane segment at 92–112 (LHWAGQTMAILCAVLGLGFII) threads the bilayer. Residues His-93 and His-127 each coordinate heme b. At 113–128 (SSKIRSEMSHLVSWHS) the chain is on the lumenal side. The chain crosses the membrane as a helical span at residues 129 to 149 (WIGALTLLATGGQALCGLCLL). Residues 150 to 169 (CPRAARVSRVARLKLYHLTC) are Cytoplasmic-facing. His-166 contributes to the heme b binding site. The helical transmembrane segment at 170–190 (GLVVYLMATVTVLLGMYSVWF) threads the bilayer. Residues 191–193 (QAQ) lie on the Lumenal side of the membrane. The chain crosses the membrane as a helical span at residues 194-214 (IKGTAWYLCLGLPLYPALVIM). Topologically, residues 215-229 (HQISSSYLPRKKVEI) are cytoplasmic.

The cofactor is heme b.

It is found in the membrane. It catalyses the reaction monodehydro-L-ascorbate radical(out) + L-ascorbate(in) = monodehydro-L-ascorbate radical(in) + L-ascorbate(out). The catalysed reaction is Fe(3+)(out) + L-ascorbate(in) = monodehydro-L-ascorbate radical(in) + Fe(2+)(out) + H(+). Functionally, probable transmembrane reductase that may use ascorbate as an electron donor and transfer electrons across membranes to reduce monodehydro-L-ascorbate radical and iron cations Fe(3+) in another cellular compartment. This chain is Probable transmembrane reductase CYB561D1, found in Mus musculus (Mouse).